The following is a 321-amino-acid chain: Phospho-N-acetylmuramoyl-pentapeptide-transferase (321 aa).

10 helical membrane passes run Met1–Ile21, Thr49–Phe69, Ile77–Ile97, Phe112–Ile132, Ile140–Trp160, Gly176–Leu196, Ala200–Val220, Val225–Met245, Ile250–Val270, and Val300–Val320.

The protein belongs to the glycosyltransferase 4 family. MraY subfamily. Requires Mg(2+) as cofactor.

Its subcellular location is the cell membrane. It catalyses the reaction UDP-N-acetyl-alpha-D-muramoyl-L-alanyl-gamma-D-glutamyl-L-lysyl-D-alanyl-D-alanine + di-trans,octa-cis-undecaprenyl phosphate = Mur2Ac(oyl-L-Ala-gamma-D-Glu-L-Lys-D-Ala-D-Ala)-di-trans,octa-cis-undecaprenyl diphosphate + UMP. The protein operates within cell wall biogenesis; peptidoglycan biosynthesis. Its function is as follows. Catalyzes the initial step of the lipid cycle reactions in the biosynthesis of the cell wall peptidoglycan: transfers peptidoglycan precursor phospho-MurNAc-pentapeptide from UDP-MurNAc-pentapeptide onto the lipid carrier undecaprenyl phosphate, yielding undecaprenyl-pyrophosphoryl-MurNAc-pentapeptide, known as lipid I. In Staphylococcus carnosus (strain TM300), this protein is Phospho-N-acetylmuramoyl-pentapeptide-transferase.